The chain runs to 430 residues: Nacrein-like protein P2 (430 aa).

Asn27 carries N-linked (GlcNAc...) asparagine glycosylation. The 397-residue stretch at 33–429 (AGFSYDRSIC…KNKVTVYKSF (397 aa)) folds into the Alpha-carbonic anhydrase domain. His132, His134, and His157 together coordinate Zn(2+). The interval 201 to 312 (DEPDDEECKR…GENGHKHGCR (112 aa)) is disordered. Positions 207-219 (ECKRILKGHHPDN) are enriched in basic and acidic residues. The span at 220–304 (NENGNGDNGN…NNGENGNNGE (85 aa)) shows a compositional bias: low complexity. 27 consecutive repeat copies span residues 225–227 (GDN), 228–230 (GNN), 231–233 (GYN), 234–236 (GDN), 237–239 (GNN), 240–242 (GDN), 243–245 (GNN), 246–248 (GYN), 249–251 (GDN), 252–254 (GNN), 255–257 (GVN), 258–260 (GNN), 261–263 (GYN), 264–266 (GDN), 267–269 (GNN), 270–272 (GDN), 273–275 (GNN), 276–278 (GYN), 279–281 (GDN), 282–284 (GNN), 285–287 (GDN), 288–290 (GNN), 291–293 (GEN), 294–296 (GNN), 297–299 (GEN), 300–301 (GN), and 303–305 (GEN). The tract at residues 225 to 305 (GDNGNNGYNG…NGENGNNGEN (81 aa)) is 27 X 3 AA approximate tandem repeats of G-X-N. Residue 370-371 (TT) coordinates substrate.

It belongs to the alpha-carbonic anhydrase family. In terms of assembly, homooligomer; disulfide-linked. May also be disulfide-linked to insoluble organic matrix. Requires Zn(2+) as cofactor. Expressed in the mantle.

The protein resides in the secreted. Its subcellular location is the extracellular space. It is found in the extracellular matrix. The enzyme catalyses hydrogencarbonate + H(+) = CO2 + H2O. In terms of biological role, acts as a negative regulator for calcification in the shells of mollusks. May function both as a calcium concentrator and as a carbonic anhydrase required for production of carbonate ions, which are assembled to CaCO(3) at mineralization sites. Is important for shell formation in both the calcitic prismatic layer and the aragonitic nacreous layer. Shows inhibitory activity of crystal formation when present in free state but, when attached to the insoluble matrix, may regulate the form and size of aragonite crystal. This is Nacrein-like protein P2 from Mizuhopecten yessoensis (Japanese scallop).